The chain runs to 508 residues: UDP-N-acetylmuramoylalanine--D-glutamate ligase (508 aa).

138-144 (GTNGKTT) serves as a coordination point for ATP.

It belongs to the MurCDEF family.

The protein localises to the cytoplasm. It carries out the reaction UDP-N-acetyl-alpha-D-muramoyl-L-alanine + D-glutamate + ATP = UDP-N-acetyl-alpha-D-muramoyl-L-alanyl-D-glutamate + ADP + phosphate + H(+). It functions in the pathway cell wall biogenesis; peptidoglycan biosynthesis. Its function is as follows. Cell wall formation. Catalyzes the addition of glutamate to the nucleotide precursor UDP-N-acetylmuramoyl-L-alanine (UMA). The protein is UDP-N-acetylmuramoylalanine--D-glutamate ligase of Bordetella avium (strain 197N).